The sequence spans 538 residues: Probable inorganic phosphate transporter 1-4 (538 aa).

Residues M1–A23 are Cytoplasmic-facing. Residues I24–V44 form a helical membrane-spanning segment. Topologically, residues T45–S69 are extracellular. A helical transmembrane segment spans residues A70–L90. The Cytoplasmic portion of the chain corresponds to G91–K98. The chain crosses the membrane as a helical span at residues V99–G119. Residues S120–K123 lie on the Extracellular side of the membrane. The helical transmembrane segment at G124–Y144 threads the bilayer. Over P145–F163 the chain is Cytoplasmic. Residues I164–I184 traverse the membrane as a helical segment. The Extracellular segment spans residues V185–A210. A helical transmembrane segment spans residues D211–W231. Topologically, residues R232 to H294 are cytoplasmic. A helical membrane pass occupies residues L295 to F315. Residues Q316 to T346 are Extracellular-facing. Residues L347–I367 traverse the membrane as a helical segment. Residues G368–R369 lie on the Cytoplasmic side of the membrane. Residues F370–P390 form a helical membrane-spanning segment. Over Y391–T396 the chain is Extracellular. The chain crosses the membrane as a helical span at residues P397–G417. The Cytoplasmic portion of the chain corresponds to P418 to G440. Residues I441 to A461 traverse the membrane as a helical segment. The Extracellular segment spans residues Q462–N481. A helical membrane pass occupies residues S482 to E502. Residues S503–A538 are Cytoplasmic-facing. Residues S507–A538 are disordered. Residues L511 to P522 are compositionally biased toward acidic residues.

Belongs to the major facilitator superfamily. Phosphate:H(+) symporter (TC 2.A.1.9) family.

The protein localises to the membrane. Its function is as follows. High-affinity transporter for external inorganic phosphate. The polypeptide is Probable inorganic phosphate transporter 1-4 (PHT1-4) (Oryza sativa subsp. indica (Rice)).